Reading from the N-terminus, the 147-residue chain is Large ribosomal subunit protein uL15 (147 aa).

The interval 1 to 45 is disordered; that stretch reads MRLEDLRPTPGAMKKRKRVGRGPGSGHGKTSGRGHKGQKARGSGK. A compositionally biased stretch (basic residues) spans 30–44; it reads TSGRGHKGQKARGSG.

It belongs to the universal ribosomal protein uL15 family. In terms of assembly, part of the 50S ribosomal subunit.

In terms of biological role, binds to the 23S rRNA. This Thermotoga sp. (strain RQ2) protein is Large ribosomal subunit protein uL15.